A 1293-amino-acid polypeptide reads, in one-letter code: DNA-directed RNA polymerase subunit beta' (1293 aa).

Zn(2+) is bound by residues C60, C62, C75, and C78. Positions 535, 537, and 539 each coordinate Mg(2+). Residues C873, C950, C957, and C960 each contribute to the Zn(2+) site.

Belongs to the RNA polymerase beta' chain family. The RNAP catalytic core consists of 2 alpha, 1 beta, 1 beta' and 1 omega subunit. When a sigma factor is associated with the core the holoenzyme is formed, which can initiate transcription. It depends on Mg(2+) as a cofactor. Zn(2+) is required as a cofactor.

It carries out the reaction RNA(n) + a ribonucleoside 5'-triphosphate = RNA(n+1) + diphosphate. Functionally, DNA-dependent RNA polymerase catalyzes the transcription of DNA into RNA using the four ribonucleoside triphosphates as substrates. This Cutibacterium acnes (strain DSM 16379 / KPA171202) (Propionibacterium acnes) protein is DNA-directed RNA polymerase subunit beta'.